Consider the following 249-residue polypeptide: Phosphate import ATP-binding protein PstB 1 (249 aa).

One can recognise an ABC transporter domain in the interval 4 to 244 (FNIENLDLFY…PKDDRTQGYV (241 aa)). An ATP-binding site is contributed by 36 to 43 (GPSGCGKS).

The protein belongs to the ABC transporter superfamily. Phosphate importer (TC 3.A.1.7) family. The complex is composed of two ATP-binding proteins (PstB), two transmembrane proteins (PstC and PstA) and a solute-binding protein (PstS).

It localises to the cell inner membrane. The catalysed reaction is phosphate(out) + ATP + H2O = ADP + 2 phosphate(in) + H(+). Its function is as follows. Part of the ABC transporter complex PstSACB involved in phosphate import. Responsible for energy coupling to the transport system. The sequence is that of Phosphate import ATP-binding protein PstB 1 from Aliivibrio fischeri (strain ATCC 700601 / ES114) (Vibrio fischeri).